The following is a 262-amino-acid chain: MASSLAPATKAATNLRLTHSLRFSPKPNNLRFATKPGNTLLCTRVKAQLNEVALDSSSNATSPPMKAKSKEEPPAKPLAEPSSSVLATQESVSQFITQVASLVKLVDSRDIVELKLKQHDVEVTIRKKEAMPQPPPAPQPSVVYSPPPPALPPPPVPASTPAPTLARATPTPTSAPAVKSAKSSLPPLKSPMAGTFYRSPAPGEPSFVKVGDKVKKGQVVCIIEAMKLMNEIEADQSGTIVEIVAEDAKSVSVDTPLFVIQP.

The N-terminal 47 residues, 1-47 (MASSLAPATKAATNLRLTHSLRFSPKPNNLRFATKPGNTLLCTRVKA), are a transit peptide targeting the chloroplast. Disordered regions lie at residues 53–84 (ALDS…PSSS) and 125–185 (IRKK…KSSL). Over residues 132 to 160 (PQPPPAPQPSVVYSPPPPALPPPPVPAST) the composition is skewed to pro residues. Residues 161–185 (PAPTLARATPTPTSAPAVKSAKSSL) show a composition bias toward low complexity. Positions 185–261 (LPPLKSPMAG…SVDTPLFVIQ (77 aa)) constitute a Biotinyl-binding domain. Residue Lys227 is modified to N6-biotinyllysine.

It is found in the plastid. It localises to the chloroplast. It functions in the pathway lipid metabolism; fatty acid biosynthesis. This protein is a component of the acetyl coenzyme A carboxylase complex; first, biotin carboxylase catalyzes the carboxylation of the carrier protein and then the transcarboxylase transfers the carboxyl group to form malonyl-CoA. In Glycine max (Soybean), this protein is Biotin carboxyl carrier protein of acetyl-CoA carboxylase, chloroplastic (ACCB-1).